Consider the following 907-residue polypeptide: Leucine-rich repeat-containing G-protein coupled receptor 5 (907 aa).

Positions 1–21 are cleaved as a signal peptide; that stretch reads MDTSSVGVLLSLPVLLQLAAG. Residues 22 to 553 are Extracellular-facing; the sequence is GGSPRPGTLL…SPGPFKLCEY (532 aa). The 32-residue stretch at 33–64 folds into the LRRNT domain; sequence GCPAHCQCEPDGRMLLRVDCSDLGLSELPSNL. 2 cysteine pairs are disulfide-bonded: Cys-34-Cys-40 and Cys-38-Cys-52. 17 LRR repeats span residues 44–64, 65–88, 89–112, 114–136, 137–160, 162–184, 185–208, 209–232, 233–256, 257–279, 281–303, 304–327, 328–350, 351–375, 377–396, 397–420, and 421–444; these read GRML…PSNL, SVFT…PLHS, LRFL…AFAG, YSLK…ALQN, LRSL…CFSG, HSLR…AFRS, LSAL…AFGN, LSSL…CFDG, LHSL…VRTL, SNLK…AFVG, PSLI…AFQH, LPEL…LTGT, ASLE…VCDQ, LPNL…VCQK, QKID…TFQQ, LFSL…AFST, and LPSL…GLHG. N-linked (GlcNAc...) asparagine glycans are attached at residues Asn-63 and Asn-77. A glycan (N-linked (GlcNAc...) asparagine) is linked at Asn-208. Residues Cys-348 and Cys-373 are joined by a disulfide bond. Cysteines 479 and 541 form a disulfide. A glycan (N-linked (GlcNAc...) asparagine) is linked at Asn-500. The helical transmembrane segment at 554–574 threads the bilayer; it reads LFGSWLIRIGVWTIAVLALTC. The stretch at 564 to 585 is one LRR 18 repeat; the sequence is VWTIAVLALTCNALVTSTVFRA. Residues 575–593 are Cytoplasmic-facing; that stretch reads NALVTSTVFRAAVYISSIK. The helical transmembrane segment at 594–614 threads the bilayer; sequence LLIGLIAAVNMLMGVSSAVLA. Over 615–638 the chain is Extracellular; it reads GVDAFTFGSFAQHGAWWEQAVGCQ. Cysteines 637 and 712 form a disulfide. The helical transmembrane segment at 639–659 threads the bilayer; sequence VVGFLSIFASESSVFLLTLAA. At 660 to 682 the chain is on the cytoplasmic side; sequence LERGWSVKCSAKFETQTPFPSLR. The chain crosses the membrane as a helical span at residues 683–703; sequence ATLALCALLAGTVAAVPLLGG. Topologically, residues 704-723 are extracellular; sequence SEYSASPLCLPLPFGEPRAT. The helical transmembrane segment at 724 to 744 threads the bilayer; that stretch reads GYMVALVLLNSLCFLVMTVAY. At 745-767 the chain is on the cytoplasmic side; sequence TRLYCHLEKGDLESMWDCSMVKH. A helical transmembrane segment spans residues 768–788; that stretch reads VALLLFTNCILHCPVAFLSFS. Topologically, residues 789–802 are extracellular; sequence SLLNLTFISPEVIK. The N-linked (GlcNAc...) asparagine glycan is linked to Asn-792. The helical transmembrane segment at 803–823 threads the bilayer; that stretch reads FILLVIVPLPACLNPLLYILF. Residues 824 to 907 are Cytoplasmic-facing; the sequence is NPHFKEDLGS…LSSVAFVPCL (84 aa).

The protein belongs to the G-protein coupled receptor 1 family. As to quaternary structure, identified in a complex composed of RNF43, LGR5 and RSPO1. Also interacts with other R-spondin ligands, including RSPO2, RSPO3 and RSPO4.

The protein resides in the cell membrane. The protein localises to the golgi apparatus. It is found in the trans-Golgi network membrane. Functionally, receptor for R-spondins that potentiates the canonical Wnt signaling pathway and acts as a stem cell marker of the intestinal epithelium and the hair follicle. Upon binding to R-spondins (RSPO1, RSPO2, RSPO3 or RSPO4), associates with phosphorylated LRP6 and frizzled receptors that are activated by extracellular Wnt receptors, triggering the canonical Wnt signaling pathway to increase expression of target genes. In contrast to classical G-protein coupled receptors, does not activate heterotrimeric G-proteins to transduce the signal. Involved in the development and/or maintenance of the adult intestinal stem cells during postembryonic development. The chain is Leucine-rich repeat-containing G-protein coupled receptor 5 (LGR5) from Bos taurus (Bovine).